Consider the following 518-residue polypeptide: Membrane-bound glycerophospholipid O-acyltransferase 2 (518 aa).

The next 6 helical transmembrane spans lie at 21-41 (PVDQVNFVVCQLFALLAAIWF), 60-80 (TLLGLYLALFCFGWYALHFVI), 87-107 (YLMIIIGVENMHKYCFVFALG), 183-203 (FMGILAGPLCSYKDYITFIEG), 230-250 (IAVAQKLLICGLSLLFHMTIT), and 267-283 (ASWPVRVFYLYLSLMAA). Active-site residues include Asn-341 and His-372. A run of 3 helical transmembrane segments spans residues 365-385 (FILSAIWHGVYPGYYLTFLTG), 415-435 (IITWMTTQVAISYTVVPFVLL), and 443-463 (FYSSCYFCLHIASILVLLVFP).

The protein belongs to the membrane-bound acyltransferase family.

It localises to the endoplasmic reticulum membrane. The catalysed reaction is a 1-acyl-sn-glycero-3-phosphocholine + an acyl-CoA = a 1,2-diacyl-sn-glycero-3-phosphocholine + CoA. The enzyme catalyses a 1-acyl-sn-glycero-3-phosphoethanolamine + an acyl-CoA = a 1,2-diacyl-sn-glycero-3-phosphoethanolamine + CoA. It carries out the reaction a 1-acyl-sn-glycero-3-phosphate + an acyl-CoA = a 1,2-diacyl-sn-glycero-3-phosphate + CoA. It catalyses the reaction (9Z)-hexadecenoyl-CoA + 1-hexadecanoyl-sn-glycero-3-phosphocholine = 1-hexadecanoyl-2-(9Z-hexadecenoyl)-sn-glycero-3-phosphocholine + CoA. The catalysed reaction is 1-hexadecanoyl-sn-glycero-3-phosphoethanolamine + (9Z)-octadecenoyl-CoA = 1-hexadecanoyl-2-(9Z-octadecenoyl)-sn-glycero-3-phosphoethanolamine + CoA. The enzyme catalyses 1-hexadecanoyl-sn-glycero-3-phosphoethanolamine + (9Z)-hexadecenoyl-CoA = 1-hexadecanoyl-2-(9Z)-hexadecenoyl-sn-glycero-3-phosphoethanolamine + CoA. It carries out the reaction 1-(9Z-octadecenoyl)-sn-glycero-3-phospho-L-serine + hexadecanoyl-CoA = 1-(9Z)-octadecenoyl-2-hexadecanoyl-sn-glycero-3-phosphoserine + CoA. It catalyses the reaction (9Z,12Z)-octadecadienoyl-CoA + 1-hexadecanoyl-sn-glycero-3-phosphocholine = 1-hexadecanoyl-2-(9Z,12Z-octadecadienoyl)-sn-glycero-3-phosphocholine + CoA. The catalysed reaction is 1-hexadecanoyl-sn-glycero-3-phosphocholine + (9Z)-octadecenoyl-CoA = 1-hexadecanoyl-2-(9Z-octadecenoyl)-sn-glycero-3-phosphocholine + CoA. The enzyme catalyses 1-hexadecanoyl-sn-glycero-3-phosphate + (9Z)-hexadecenoyl-CoA = 1-hexadecanoyl-2-[(9Z)-hexadec-9-enoyl]-sn-glycero-3-phosphate + CoA. It carries out the reaction 1-hexadecanoyl-sn-glycero-3-phosphate + (9Z)-octadecenoyl-CoA = 1-hexadecanoyl-2-(9Z-octadecenoyl)-sn-glycero-3-phosphate + CoA. It catalyses the reaction a 1-O-(1Z-alkenyl)-sn-glycero-3-phosphocholine + (9Z)-octadecenoyl-CoA = 1-O-(1Z)-alkenyl-2-(9Z)-octadecenoyl-sn-glycero-3-phosphocholine + CoA. The catalysed reaction is a 1-O-(1Z-alkenyl)-sn-glycero-3-phosphoethanolamine + (9Z)-octadecenoyl-CoA = 1-O-(1Z)-alkenyl-2-(9Z)-octadecenoyl-sn-glycero-3-phosphoethanolamine + CoA. The enzyme catalyses 1-octadecanoyl-sn-glycero-3-phosphoethanolamine + (9Z)-octadecenoyl-CoA = 1-octadecanoyl-2-(9Z-octadecenoyl)-sn-glycero-3-phosphoethanolamine + CoA. It carries out the reaction 1-octadecanoyl-sn-glycero-3-phosphocholine + (9Z)-octadecenoyl-CoA = 1-octadecanoyl-2-(9Z-octadecenoyl)-sn-glycero-3-phosphocholine + CoA. It catalyses the reaction 1-(9Z-octadecenoyl)-sn-glycero-3-phosphoethanolamine + (9Z)-octadecenoyl-CoA = 1,2-di-(9Z-octadecenoyl)-sn-glycero-3-phosphoethanolamine + CoA. Its pathway is lipid metabolism; phospholipid metabolism. In terms of biological role, acyltransferase which catalyzes the transfer of an acyl group from an acyl-CoA to a lysophospholipid leading to the production of a phospholipid and participates in the reacylation step of the phospholipid remodeling pathway also known as the Lands cycle. May catalyze preferentially the acylation of lysophosphatidylethanolamine (1-acyl-sn-glycero-3-phosphoethanolamine or LPE) and lysophosphatidic acid (LPA) and to a lesser extend lysophosphatidylcholine (LPC) and lysophosphatidylserine (LPS). Prefers oleoyl-CoA as the acyl donor. The polypeptide is Membrane-bound glycerophospholipid O-acyltransferase 2 (Gallus gallus (Chicken)).